The primary structure comprises 327 residues: Serine/threonine-protein phosphatase PP1-beta catalytic subunit (327 aa).

Alanine 2 carries the N-acetylalanine modification. Mn(2+) contacts are provided by aspartate 63, histidine 65, aspartate 91, and asparagine 123. The active-site Proton donor is histidine 124. Mn(2+) is bound by residues histidine 172 and histidine 247. The interval 305–327 (QYGGLNSGRPVTPPRTANPPKKR) is disordered.

This sequence belongs to the PPP phosphatase family. PP-1 subfamily. Requires Mn(2+) as cofactor.

It localises to the cytoplasm. The protein resides in the nucleus. It catalyses the reaction O-phospho-L-seryl-[protein] + H2O = L-seryl-[protein] + phosphate. It carries out the reaction O-phospho-L-threonyl-[protein] + H2O = L-threonyl-[protein] + phosphate. Its function is as follows. Protein phosphatase that associates with over 200 regulatory proteins to form highly specific holoenzymes which dephosphorylate hundreds of biological targets. Protein phosphatase (PP1) is essential for cell division, it participates in the regulation of glycogen metabolism, muscle contractility and protein synthesis. Involved in regulation of ionic conductances and long-term synaptic plasticity. This chain is Serine/threonine-protein phosphatase PP1-beta catalytic subunit (ppp1cb), found in Xenopus laevis (African clawed frog).